A 205-amino-acid polypeptide reads, in one-letter code: Large ribosomal subunit protein uL3c (205 aa).

The disordered stretch occupies residues 129 to 154 (SRGPMSHGSKNHRQPGSIGAGTTPGR).

This sequence belongs to the universal ribosomal protein uL3 family. Part of the 50S ribosomal subunit.

The protein resides in the plastid. The protein localises to the chloroplast. Its function is as follows. One of the primary rRNA binding proteins, it binds directly near the 3'-end of the 23S rRNA, where it nucleates assembly of the 50S subunit. The protein is Large ribosomal subunit protein uL3c (rpl3) of Pyropia yezoensis (Susabi-nori).